Reading from the N-terminus, the 329-residue chain is Putative glucose-6-phosphate 1-epimerase (329 aa).

Low complexity predominate over residues Met-1–Pro-13. The interval Met-1–Pro-20 is disordered. Arg-82, Gln-100, and Arg-105 together coordinate substrate. His-183 is an active-site residue. Asp-228 serves as a coordination point for substrate. Glu-287 is an active-site residue.

It belongs to the glucose-6-phosphate 1-epimerase family.

The catalysed reaction is alpha-D-glucose 6-phosphate = beta-D-glucose 6-phosphate. The polypeptide is Putative glucose-6-phosphate 1-epimerase (Cenchrus ciliaris (Buffelgrass)).